A 472-amino-acid polypeptide reads, in one-letter code: Glutamate--tRNA ligase (472 aa).

Positions 9–19 (PSPTGYLHVGG) match the 'HIGH' region motif. Zn(2+) is bound by residues cysteine 98, cysteine 100, cysteine 125, and histidine 127. A 'KMSKS' region motif is present at residues 237-241 (KLSKR). Position 240 (lysine 240) interacts with ATP.

The protein belongs to the class-I aminoacyl-tRNA synthetase family. Glutamate--tRNA ligase type 1 subfamily. In terms of assembly, monomer. Zn(2+) serves as cofactor.

The protein localises to the cytoplasm. It catalyses the reaction tRNA(Glu) + L-glutamate + ATP = L-glutamyl-tRNA(Glu) + AMP + diphosphate. Catalyzes the attachment of glutamate to tRNA(Glu) in a two-step reaction: glutamate is first activated by ATP to form Glu-AMP and then transferred to the acceptor end of tRNA(Glu). The protein is Glutamate--tRNA ligase of Klebsiella pneumoniae subsp. pneumoniae (strain ATCC 700721 / MGH 78578).